The chain runs to 116 residues: Large ribosomal subunit protein uL18 (116 aa).

Belongs to the universal ribosomal protein uL18 family. As to quaternary structure, part of the 50S ribosomal subunit; part of the 5S rRNA/L5/L18/L25 subcomplex. Contacts the 5S and 23S rRNAs.

This is one of the proteins that bind and probably mediate the attachment of the 5S RNA into the large ribosomal subunit, where it forms part of the central protuberance. This is Large ribosomal subunit protein uL18 from Teredinibacter turnerae (strain ATCC 39867 / T7901).